The following is a 298-amino-acid chain: HTH-type transcriptional regulator YhaJ (298 aa).

In terms of domain architecture, HTH lysR-type spans 7–64; it reads LTLEALRVMDAIDRRGSFAAAADELGRVPSALSYTMQKLEEELDVVLFDRSGHRTKFT. The H-T-H motif DNA-binding region spans 24–43; the sequence is FAAAADELGRVPSALSYTMQ.

It belongs to the LysR transcriptional regulatory family.

In terms of biological role, positive regulator partially required for expression of genes in the locus of effacement (LEE) large pathogenicity island (PAI). Also partially responsible for expression of neighboring gene dlsT (yhaO) during late exponential growth. Binds to DNA of promoter 1 in LEE and DNA from the dlsT promoter region. In Escherichia coli O157:H7, this protein is HTH-type transcriptional regulator YhaJ (yhaJ).